The following is a 488-amino-acid chain: Ribulose bisphosphate carboxylase large chain (488 aa).

Residues Asn-127 and Thr-177 each contribute to the substrate site. Residue Lys-179 is the Proton acceptor of the active site. Lys-181 contacts substrate. The Mg(2+) site is built by Lys-205, Asp-207, and Glu-208. At Lys-205 the chain carries N6-carboxylysine. His-297 functions as the Proton acceptor in the catalytic mechanism. The substrate site is built by Arg-298, His-330, and Ser-382.

It belongs to the RuBisCO large chain family. Type I subfamily. As to quaternary structure, heterohexadecamer of 8 large chains and 8 small chains. Requires Mg(2+) as cofactor.

The protein resides in the plastid. Its subcellular location is the chloroplast. It catalyses the reaction 2 (2R)-3-phosphoglycerate + 2 H(+) = D-ribulose 1,5-bisphosphate + CO2 + H2O. It carries out the reaction D-ribulose 1,5-bisphosphate + O2 = 2-phosphoglycolate + (2R)-3-phosphoglycerate + 2 H(+). In terms of biological role, ruBisCO catalyzes two reactions: the carboxylation of D-ribulose 1,5-bisphosphate, the primary event in carbon dioxide fixation, as well as the oxidative fragmentation of the pentose substrate in the photorespiration process. Both reactions occur simultaneously and in competition at the same active site. The chain is Ribulose bisphosphate carboxylase large chain (rbcL) from Porphyra umbilicalis (Purple laver).